A 113-amino-acid polypeptide reads, in one-letter code: Hydrogenase maturation factor HypA (113 aa).

H2 provides a ligand contact to Ni(2+). Zn(2+) is bound by residues C73, C76, C89, and C92.

This sequence belongs to the HypA/HybF family.

Functionally, involved in the maturation of [NiFe] hydrogenases. Required for nickel insertion into the metal center of the hydrogenase. This chain is Hydrogenase maturation factor HypA, found in Alkalilimnicola ehrlichii (strain ATCC BAA-1101 / DSM 17681 / MLHE-1).